The chain runs to 981 residues: Tudor domain-containing protein 5 (981 aa).

The HTH OST-type 1 domain occupies 7–80; that stretch reads IQECLRKEIR…GGTVILKAIP (74 aa). Positions 98 to 108 are enriched in basic residues; that stretch reads HKLRNSMHKGR. The disordered stretch occupies residues 98–118; that stretch reads HKLRNSMHKGRPSIYSGPRSH. 2 HTH OST-type domains span residues 127–202 and 295–369; these read VAPI…LKKS and ISSE…FDAD. In terms of domain architecture, Tudor spans 525 to 584; that stretch reads FIQPGHLCCVRISEDKWWYRVIIHRVLEKQEVEVFYPDFGNIGIVQKSSLRFLKCCYTKL. The disordered stretch occupies residues 808–908; that stretch reads EVHKPEVLGA…SVESSPEILK (101 aa). 2 stretches are compositionally biased toward polar residues: residues 819-842 and 850-889; these read EKNT…SSTL and TSLT…TTAV. Phosphoserine is present on serine 892.

It belongs to the TDRD5 family.

It localises to the cytoplasm. Functionally, required during spermiogenesis to participate in the repression transposable elements and prevent their mobilization, which is essential for the germline integrity. Probably acts via the piRNA metabolic process, which mediates the repression of transposable elements during meiosis by forming complexes composed of piRNAs and Piwi proteins and govern the methylation and subsequent repression of transposons. Required for chromatoid body (CB) assembly. In Homo sapiens (Human), this protein is Tudor domain-containing protein 5 (TDRD5).